The primary structure comprises 44 residues: Endochitinase 1 (44 aa).

Belongs to the glycosyl hydrolase 19 family. Chitinase class I subfamily.

The catalysed reaction is Random endo-hydrolysis of N-acetyl-beta-D-glucosaminide (1-&gt;4)-beta-linkages in chitin and chitodextrins.. In terms of biological role, defense against chitin-containing fungal pathogens. The polypeptide is Endochitinase 1 (Capsicum chinense (Scotch bonnet)).